The sequence spans 102 residues: uncharacterized protein (102 aa).

This is an uncharacterized protein from Escherichia coli (Bacteriophage T4).